The following is a 1445-amino-acid chain: ABC-type transporter FGSG_00046 (1445 aa).

Helical transmembrane passes span 21-41 (LFEECFLDILPWSLFLLMLLV), 77-97 (LILWASIAAFTTAGTVPAAAL), 119-138 (PSSLLGILTLLILLCDVTRV), 150-170 (ISILTTAALPINILLLVFESL), 187-207 (EIVGILNRSVFWWLNSLFILG), 255-277 (TLLRGGLCRLFTALFVTSQPLLL), 297-317 (YGLIGAYLVVYGGRAVFTALA), 368-388 (LQFVHEIWATPAEFGVAIFLL), 392-412 (VALGSLAPVIIIIVAIVGTVL), 481-501 (VFSTATATISPVLGFTIYVLM), and 520-540 (SLFSILSSSVYIFLTSVPAIF). Positions 259–541 (GGLCRLFTAL…FLTSVPAIFS (283 aa)) constitute an ABC transmembrane type-1 1 domain. The 227-residue stretch at 595-821 (IRDGSVRWKG…DEIEASTYSR (227 aa)) folds into the ABC transporter 1 domain. 627–634 (GSVGSGKS) contacts ATP. The interval 803–850 (RNTQKDMQDDEIEASTYSREQNGPKKQEEDANHESNQSPETSQEHELA) is disordered. The span at 824–835 (NGPKKQEEDANH) shows a compositional bias: basic and acidic residues. 6 consecutive transmembrane segments (helical) span residues 868-888 (GMGFFALSFSLSLVYSFWQNF), 912-932 (IGVYILCAVLALVTHTVVTWF), 1004-1024 (IPLTGVQALFAFTSALVQLVM), 1026-1046 (SIGTKWMAITFPFIIAILAII), 1116-1136 (LTLVLNLVIGAMAILMMGVTI), and 1147-1167 (IGLAFVNLTTFSQSIQSLLTW). Residues 974-1173 (HRAPMSYFES…LLTWWTMMEA (200 aa)) enclose the ABC transmembrane type-1 2 domain. The region spanning 1210–1441 (IELKELSASY…DVSLFQDLFS (232 aa)) is the ABC transporter 2 domain. 1244–1251 (GRTGSGKT) is a binding site for ATP.

The protein belongs to the ABC transporter superfamily. ABCC family.

It localises to the cell membrane. ABC-type transporter; part of the gene cluster that mediates the biosynthesis of gramillins A and B, bicyclic lipopeptides that induce cell death in maize leaves but not in wheat leaves. May be involved in the secretion of gramillins. This is ABC-type transporter FGSG_00046 from Gibberella zeae (strain ATCC MYA-4620 / CBS 123657 / FGSC 9075 / NRRL 31084 / PH-1) (Wheat head blight fungus).